A 165-amino-acid polypeptide reads, in one-letter code: LIM domain transcription factor LMO4 (165 aa).

2 LIM zinc-binding domains span residues 23–83 and 87–147; these read CAGC…LFGN and CSAC…ALIN.

In terms of assembly, interacts strongly with LDBS. Interacts with LDB2 and LDB1. Interaction with complexes consisting of at least LDB1 and LHX3 acts to disassemble the complex; may preferentially disassemble LDB1-LHX3 complexes rather than complexes consisting of LDB1, LHX3 and ISL1. Interacts (via the LIM zinc-binding domain 1) with RBBP8. Interacts with both RPPB8 and LDB1 through the same face and cannot bind to both proteins simultaneously. Interacts with BRCA1 (via the BRCT domains); the interaction represses BRCA1 transcriptional activity. Interacts with DEAF1; LMO4 blocks export from nucleus.

Its function is as follows. Transcription cofactor. Plays a role in establishing motor neuron identity, in concert with MNX1, acting, at least in part, to disrupt LDB1-LHX3 complexes thereby negatively modulating interneuron genes in motor neurons. The sequence is that of LIM domain transcription factor LMO4 (LMO4) from Bos taurus (Bovine).